The primary structure comprises 125 residues: NYHPASETIQALDENILLLKPAFQYSDNVAKEYENKCKNQIALKVEEILQNQGYKVISVDSSDKDDLSFAQKKEGYLTLSLSGEIVLRPDPKRTTQKKSEPGLLFSTGLDKMQGVLISAGFVKVT.

The segment at 92 to 97 (KRTTQK) is N-acetyl-neuraminyl-alpha(2,3)-lactose binding motif.

It localises to the cell outer membrane. In Helicobacter acinonychis (Helicobacter acinonyx), this protein is Neuraminyllactose-binding hemagglutinin (hpaA).